A 65-amino-acid polypeptide reads, in one-letter code: Small ribosomal subunit protein bS21 (65 aa).

The interval 45–65 (GRLKRSRSKRRAQRANEERNS) is disordered. Over residues 48–57 (KRSRSKRRAQ) the composition is skewed to basic residues.

This sequence belongs to the bacterial ribosomal protein bS21 family.

This Chlorobium luteolum (strain DSM 273 / BCRC 81028 / 2530) (Pelodictyon luteolum) protein is Small ribosomal subunit protein bS21.